The sequence spans 97 residues: Glutamyl-tRNA(Gln) amidotransferase subunit C (97 aa).

Belongs to the GatC family. As to quaternary structure, heterotrimer of A, B and C subunits.

It catalyses the reaction L-glutamyl-tRNA(Gln) + L-glutamine + ATP + H2O = L-glutaminyl-tRNA(Gln) + L-glutamate + ADP + phosphate + H(+). The catalysed reaction is L-aspartyl-tRNA(Asn) + L-glutamine + ATP + H2O = L-asparaginyl-tRNA(Asn) + L-glutamate + ADP + phosphate + 2 H(+). Allows the formation of correctly charged Asn-tRNA(Asn) or Gln-tRNA(Gln) through the transamidation of misacylated Asp-tRNA(Asn) or Glu-tRNA(Gln) in organisms which lack either or both of asparaginyl-tRNA or glutaminyl-tRNA synthetases. The reaction takes place in the presence of glutamine and ATP through an activated phospho-Asp-tRNA(Asn) or phospho-Glu-tRNA(Gln). The protein is Glutamyl-tRNA(Gln) amidotransferase subunit C of Sulfurisphaera tokodaii (strain DSM 16993 / JCM 10545 / NBRC 100140 / 7) (Sulfolobus tokodaii).